We begin with the raw amino-acid sequence, 98 residues long: NADH-ubiquinone oxidoreductase chain 4L (98 aa).

3 helical membrane-spanning segments follow: residues 2–22 (TPIFTNIILAFATAFLGTLIF), 29–49 (SLLCLEGMMLSLFILSTLIIL), and 61–81 (ILLLVFAACEAAIGLALLVMV).

Belongs to the complex I subunit 4L family. As to quaternary structure, core subunit of respiratory chain NADH dehydrogenase (Complex I) which is composed of 45 different subunits.

It localises to the mitochondrion inner membrane. It carries out the reaction a ubiquinone + NADH + 5 H(+)(in) = a ubiquinol + NAD(+) + 4 H(+)(out). Functionally, core subunit of the mitochondrial membrane respiratory chain NADH dehydrogenase (Complex I) which catalyzes electron transfer from NADH through the respiratory chain, using ubiquinone as an electron acceptor. Part of the enzyme membrane arm which is embedded in the lipid bilayer and involved in proton translocation. This Avahi cleesei (Cleese's woolly lemur) protein is NADH-ubiquinone oxidoreductase chain 4L (MT-ND4L).